The sequence spans 34 residues: Mytilin-A (34 aa).

Intrachain disulfides connect Cys-2-Cys-27, Cys-6-Cys-29, Cys-10-Cys-31, and Cys-15-Cys-34.

The protein resides in the secreted. Has antibacterial activity against A.viridans, B.megaterium, M.luteus, E.faecalis, S.aureus and E.coli. It is active against the marine species A.carrageenovora, P.alginovora and C.drobachiensis. This is Mytilin-A from Mytilus edulis (Blue mussel).